Consider the following 127-residue polypeptide: Small ribosomal subunit protein uS13 (127 aa).

Positions 93-127 are disordered; it reads RRGMPVRGQRTRTNARTRRGRRGQAIGIKKKATKK.

It belongs to the universal ribosomal protein uS13 family. Part of the 30S ribosomal subunit. Forms a loose heterodimer with protein S19. Forms two bridges to the 50S subunit in the 70S ribosome.

Located at the top of the head of the 30S subunit, it contacts several helices of the 16S rRNA. In the 70S ribosome it contacts the 23S rRNA (bridge B1a) and protein L5 of the 50S subunit (bridge B1b), connecting the 2 subunits; these bridges are implicated in subunit movement. Contacts the tRNAs in the A and P-sites. The sequence is that of Small ribosomal subunit protein uS13 from Chloroflexus aurantiacus (strain ATCC 29366 / DSM 635 / J-10-fl).